The following is an 84-amino-acid chain: Magnetosome protein MamG (84 aa).

Topologically, residues 1–3 are cytoplasmic; that stretch reads MIK. Residues 4–24 form a helical membrane-spanning segment; that stretch reads GIAGVGGTALGVGGGVAAPPV. Over 25–40 the chain is Lumenal; sequence SAAAVGSTLLAGKGVC. The LG repeat stretch occupies residues 41–48; sequence LGLGLGLG. The chain crosses the membrane as a helical span at residues 41–61; that stretch reads LGLGLGLGAWGPVLLGVAGLA. Residues 62–84 are Cytoplasmic-facing; the sequence is CAASLCDYLKNRKAQAEASAEPA.

This sequence belongs to the magnetosome MamG (TC 9.B.95) protein family.

The protein resides in the magnetosome membrane. Functionally, plays a role in regulating magnetite crystal size. The chain is Magnetosome protein MamG from Magnetospirillum gryphiswaldense (strain DSM 6361 / JCM 21280 / NBRC 15271 / MSR-1).